The chain runs to 714 residues: GATA zinc finger domain-containing protein 10 (714 aa).

Disordered stretches follow at residues 28–97 (YIQQ…NKQI), 115–180 (TMPH…QQQQ), 266–362 (MPMN…QQQQ), 394–419 (QQQQ…ESMD), 454–476 (MHLQ…QQIQ), and 528–621 (IQQQ…RRRT). 2 stretches are compositionally biased toward low complexity: residues 30–94 (QQQQ…NNNN) and 130–147 (QQQQ…QHPH). The segment covering 148-168 (QQQHPHQQQHPHQQQHPHQQQ) has biased composition (basic residues). Residues 169 to 180 (HPHQQQIQQQQQ) are compositionally biased toward low complexity. A compositionally biased stretch (polar residues) spans 271–282 (GGNSRKNSFDMY). Composition is skewed to low complexity over residues 283-322 (NNNN…NNNI) and 340-362 (QHQQ…QQQQ). Low complexity-rich tracts occupy residues 457–476 (QQQQ…QQIQ) and 528–549 (IQQQ…TPNN). Positions 550-569 (GSPSSSDGKSPVNSNTAITS) are enriched in polar residues. Residues 570–588 (NNNNNNNNNNNNNNNNNNN) show a composition bias toward low complexity. A GATA-type zinc finger spans residues 631-656 (CHYCEVTETPEWRRGPDGDHTLCNAC). The stretch at 661-694 (AKSQKKLAREKELEKQKELEREKERENTRKHSID) forms a coiled coil. Residues 667 to 693 (LAREKELEKQKELEREKERENTRKHSI) are compositionally biased toward basic and acidic residues. Residues 667–714 (LAREKELEKQKELEREKERENTRKHSIDFMLMNDTSSAPTNSQNPTPN) form a disordered region. Residues 699-714 (NDTSSAPTNSQNPTPN) show a composition bias toward polar residues.

This Dictyostelium discoideum (Social amoeba) protein is GATA zinc finger domain-containing protein 10 (gtaJ).